Reading from the N-terminus, the 406-residue chain is Olfactomedin-like protein 3 (406 aa).

Positions 1–21 (MGPSAPLLLFFLLSWPGSLQG) are cleaved as a signal peptide. Positions 22–101 (QQHHLVEYME…REVDYLETQN (80 aa)) form a coiled coil. Residues 134 to 401 (DCSYTISQVR…QIVYKLEMKK (268 aa)) enclose the Olfactomedin-like domain. Cys-135 and Cys-328 are disulfide-bonded. Asn-248 is a glycosylation site (N-linked (GlcNAc...) asparagine).

It belongs to the OLFML3 family.

It is found in the secreted. In terms of biological role, secreted scaffold protein that plays an essential role in dorsoventral patterning during early development. Stabilizes axial formation by restricting chordin (CHRD) activity on the dorsal side. Acts by facilitating the association between the tolloid proteases and their substrate chordin (CHRD), leading to enhance chordin (CHRD) degradation. May have matrix-related function involved in placental and embryonic development, or play a similar role in other physiological processes. The chain is Olfactomedin-like protein 3 (Olfml3) from Rattus norvegicus (Rat).